The sequence spans 490 residues: GTPase Der (490 aa).

EngA-type G domains are found at residues Pro3 to Val166 and Ile203 to Thr376. GTP is bound by residues Gly9–Ser16, Asp56–Ile60, Asn118–Asp121, Gly209–Ser216, Asp256–Val260, and Asn321–Asp324. Positions Arg377–Glu461 constitute a KH-like domain.

This sequence belongs to the TRAFAC class TrmE-Era-EngA-EngB-Septin-like GTPase superfamily. EngA (Der) GTPase family. In terms of assembly, associates with the 50S ribosomal subunit.

Its function is as follows. GTPase that plays an essential role in the late steps of ribosome biogenesis. In Salmonella enteritidis PT4 (strain P125109), this protein is GTPase Der.